The chain runs to 437 residues: MKNWKFPLISTLLLLLTINVHAAPVELDRVVAIVDEGVVLQSDIDTSLKTVKINAQEKGQPLPDEAVLREQVLEKLIVDTIQSQQAEKMGIRIDDTRLEAALNDIAKENNMTLAQLQQKTAAQGLPYANFREQIRKEIAASEARNAQVRRRINILPQEVESLAQLLAEETQATVQYKISHIQLRVEDGATQADKEALEKQAEDLTERLKQGADFATMAYTYSKGPKALQGGDWGWMRKEEMPTIFADQITGQGKNSIIGPFRSGVGFHILKIDDVKGLETVAVTEVNARHILIKTSVIMSDEGAQRLLNTIIDDIKSGKETFADMAQRYSQDPGSAANDGELGFQTPDLYVPEFKHQVETLPVGQISAPFKTVHGWHIAEVLERRQVDRTDAAMKNKAYRILLNRKFNEEAGAWLQEIRASAYVEILQDDDGEDDNE.

The signal sequence occupies residues 1-22 (MKNWKFPLISTLLLLLTINVHA). 2 PpiC domains span residues 173–274 (TVQY…KIDD) and 283–383 (VTEV…EVLE).

It localises to the periplasm. The catalysed reaction is [protein]-peptidylproline (omega=180) = [protein]-peptidylproline (omega=0). Its function is as follows. Chaperone involved in the correct folding and assembly of outer membrane proteins. Recognizes specific patterns of aromatic residues and the orientation of their side chains, which are found more frequently in integral outer membrane proteins. May act in both early periplasmic and late outer membrane-associated steps of protein maturation. This is Chaperone SurA from Aliivibrio fischeri (strain ATCC 700601 / ES114) (Vibrio fischeri).